Consider the following 305-residue polypeptide: MDWVAVIVSIIPFVGVLLAVGFYTLLERKILAIIMIRKGPSKVSYMGILQPFSDAGKLLCKEFIVPTRANVGPFILAPALMLAISLLGWLLYPYKSAEVFYVFGVILFMVITSVSVYGVMMSGWASNSKYSLLGAVRAMAQSISYEIPMGFIFFCVVLCSGVFMFQEISVFQQSLFFFFLPLCVVMLVWMLCMLAETNRAPFDFVEGESELVSGYNVEYSGGGFAVMFIAEYSSILLSSVMSAAMFFGGNEALVGFFMMVFAIFFVVVRASLPRLRYDKLMNLCWTVLLCVMLTASVCVVVLVGV.

8 helical membrane passes run Trp-3 to Tyr-23, Val-71 to Leu-91, Val-99 to Val-119, Tyr-145 to Phe-165, Leu-175 to Ala-195, Gly-221 to Met-241, Phe-246 to Val-266, and Trp-285 to Val-305.

Belongs to the complex I subunit 1 family.

It localises to the mitochondrion inner membrane. The catalysed reaction is a ubiquinone + NADH + 5 H(+)(in) = a ubiquinol + NAD(+) + 4 H(+)(out). Its function is as follows. Core subunit of the mitochondrial membrane respiratory chain NADH dehydrogenase (Complex I) that is believed to belong to the minimal assembly required for catalysis. Complex I functions in the transfer of electrons from NADH to the respiratory chain. The immediate electron acceptor for the enzyme is believed to be ubiquinone. The protein is NADH-ubiquinone oxidoreductase chain 1 (ND1) of Mytilus edulis (Blue mussel).